Here is a 133-residue protein sequence, read N- to C-terminus: Large ribosomal subunit protein uL22 (133 aa).

The protein belongs to the universal ribosomal protein uL22 family. As to quaternary structure, part of the 50S ribosomal subunit.

Its function is as follows. This protein binds specifically to 23S rRNA; its binding is stimulated by other ribosomal proteins, e.g. L4, L17, and L20. It is important during the early stages of 50S assembly. It makes multiple contacts with different domains of the 23S rRNA in the assembled 50S subunit and ribosome. In terms of biological role, the globular domain of the protein is located near the polypeptide exit tunnel on the outside of the subunit, while an extended beta-hairpin is found that lines the wall of the exit tunnel in the center of the 70S ribosome. This Borrelia garinii subsp. bavariensis (strain ATCC BAA-2496 / DSM 23469 / PBi) (Borreliella bavariensis) protein is Large ribosomal subunit protein uL22.